A 323-amino-acid chain; its full sequence is MSVTLQRTEANGDGASPFVELDRQTWSRLAAQMEQPLNEEDIFRLRGLGDPLDMKEVREVYLPLSRLLHLYVEASHQLHAATTTFLGEQTQRTPFVIGVAGSVAVGKSTIARVLREMLRRWPGTPNVELITTDGFLYPLAELKRRHLLERKGFPESYDRRGLLRFVSEVKGGAEEVRAPWYSHVTYDIVPGKEVVVRRPDVLIVEGLNVLAPARPRMDGKQGLAVSDFFDFSIYVDAKTSYIEEWYVDRFRKLRTTAFAQPESYFHRYATLSDDDAESTARGIWKRINEPNLEENVLPTRGRAQLVLTKDADHSIRRMLLRKV.

Residue 101–108 coordinates ATP; it reads GSVAVGKS.

The protein belongs to the prokaryotic pantothenate kinase family.

The protein resides in the cytoplasm. It carries out the reaction (R)-pantothenate + ATP = (R)-4'-phosphopantothenate + ADP + H(+). The protein operates within cofactor biosynthesis; coenzyme A biosynthesis; CoA from (R)-pantothenate: step 1/5. The polypeptide is Pantothenate kinase (Paenarthrobacter aurescens (strain TC1)).